Here is a 99-residue protein sequence, read N- to C-terminus: Plastocyanin (99 aa).

Residues 1-99 enclose the Plastocyanin-like domain; that stretch reads VEILLGGEDG…AGMVGKVTVN (99 aa). Positions 37, 84, 87, and 92 each coordinate Cu cation.

Belongs to the plastocyanin family. Cu(2+) serves as cofactor.

The protein localises to the plastid. The protein resides in the chloroplast thylakoid membrane. Its function is as follows. Participates in electron transfer between P700 and the cytochrome b6-f complex in photosystem I. This chain is Plastocyanin (PETE), found in Sambucus nigra (European elder).